A 304-amino-acid polypeptide reads, in one-letter code: Dermonecrotic toxin LiSicTox-betaIA1i (304 aa).

Residues 1-21 (MLLPAVISFIVYAVFLQEANG) form the signal peptide. A propeptide spanning residues 22-26 (HAAER) is cleaved from the precursor. His38 is a catalytic residue. Positions 58 and 60 each coordinate Mg(2+). Residue His74 is the Nucleophile of the active site. Intrachain disulfides connect Cys78–Cys84 and Cys80–Cys223. Asp118 provides a ligand contact to Mg(2+).

Belongs to the arthropod phospholipase D family. Class II subfamily. Class IIb sub-subfamily. It depends on Mg(2+) as a cofactor. Expressed by the venom gland.

The protein localises to the secreted. The enzyme catalyses an N-(acyl)-sphingosylphosphocholine = an N-(acyl)-sphingosyl-1,3-cyclic phosphate + choline. The catalysed reaction is an N-(acyl)-sphingosylphosphoethanolamine = an N-(acyl)-sphingosyl-1,3-cyclic phosphate + ethanolamine. It catalyses the reaction a 1-acyl-sn-glycero-3-phosphocholine = a 1-acyl-sn-glycero-2,3-cyclic phosphate + choline. It carries out the reaction a 1-acyl-sn-glycero-3-phosphoethanolamine = a 1-acyl-sn-glycero-2,3-cyclic phosphate + ethanolamine. Its function is as follows. Dermonecrotic toxins cleave the phosphodiester linkage between the phosphate and headgroup of certain phospholipids (sphingolipid and lysolipid substrates), forming an alcohol (often choline) and a cyclic phosphate. This toxin acts on sphingomyelin (SM) with low activity. It may also act on ceramide phosphoethanolamine (CPE), lysophosphatidylcholine (LPC) and lysophosphatidylethanolamine (LPE), but not on lysophosphatidylserine (LPS), and lysophosphatidylglycerol (LPG). It acts by transphosphatidylation, releasing exclusively cyclic phosphate products as second products. Induces inflammatory response but no or very weak hemolysis, dermonecrosis, vascular permeability, edema, and cytotoxicity against renal epithelial cells. Causes swelling and erythema. In vivo, is not lethal to mice when intraperitoneally injected. In Loxosceles intermedia (Brown spider), this protein is Dermonecrotic toxin LiSicTox-betaIA1i.